The primary structure comprises 218 residues: MTWPAFIDHQRTQPYYQQLIAFVNQERQVGKVIYPPKEDVFNAFKTTPLEQVRVVLIGQDPYHGPDQAHGLCFSVKRGVKAPPSLANMYKELVNDIPGFHIPNHGDLTQWAEQGILMLNTVLTVEQGQAHSHANAGWEIFTTEALKLLNAQERPIIFVLWGSHAIKKGAVITAPQHQILSGPHPSPLSAYRGFFGCGHFSKVNQLLMARGEAPIQWQI.

D60 (proton acceptor) is an active-site residue.

The protein belongs to the uracil-DNA glycosylase (UDG) superfamily. UNG family.

It is found in the cytoplasm. It carries out the reaction Hydrolyzes single-stranded DNA or mismatched double-stranded DNA and polynucleotides, releasing free uracil.. Excises uracil residues from the DNA which can arise as a result of misincorporation of dUMP residues by DNA polymerase or due to deamination of cytosine. The polypeptide is Uracil-DNA glycosylase (Shewanella oneidensis (strain ATCC 700550 / JCM 31522 / CIP 106686 / LMG 19005 / NCIMB 14063 / MR-1)).